The following is a 363-amino-acid chain: Ferrochelatase (363 aa).

Positions 209 and 290 each coordinate Fe cation.

The protein belongs to the ferrochelatase family.

It is found in the cytoplasm. It catalyses the reaction heme b + 2 H(+) = protoporphyrin IX + Fe(2+). It functions in the pathway porphyrin-containing compound metabolism; protoheme biosynthesis; protoheme from protoporphyrin-IX: step 1/1. Functionally, catalyzes the ferrous insertion into protoporphyrin IX. The protein is Ferrochelatase of Azoarcus sp. (strain BH72).